The chain runs to 345 residues: Delta(6)-protoilludene synthase (345 aa).

D84, N220, S224, and E228 together coordinate Mg(2+). Residues 84–88 (DEYSD) carry the DDXXD motif motif. Positions 309 and 310 each coordinate (2E,6E)-farnesyl diphosphate.

The protein belongs to the terpene synthase family. Monomer. Mg(2+) serves as cofactor.

It carries out the reaction (2E,6E)-farnesyl diphosphate = Delta(6)-protoilludene + diphosphate. The protein operates within secondary metabolite biosynthesis. Delta(6)-protoilludene synthase, part of the gene cluster that mediates the biosynthesis of melleolides, a range of antifungal and phytotoxic polyketide derivatives composed of an orsellinic acid (OA) moiety esterified to various sesquiterpene alcohols. The first step in melleolides biosynthesis is performed by the delta(6)-protoilludene synthase PRO1 which catalyzes the cyclization of farnesyl diphosphate to protoilludene. The orsellinic acid synthase armB produces OA by condensing acetyl-CoA with 3 malonyl-CoA units in a three-round chain elongation reaction folowed by a C2-C7 ring closure. ArmB further catalyzes the trans-esterification of OA to the various sesquiterpene alcohols resulting from the hydroxylation of protoilludene. The melleolides cluster also includes 5 cytochrome P450 monooxygenases, 4 NAD(+)-dependent oxidoreductases, one flavin-dependent oxidoreductase, and one O-methyltransferase. The cytochrome P450 monooxygenases may be involved in protoilludene hydroxylation to elaborate melleolides with multiple alcohol groups, such as melleolide D, which carries alcohol functionalities at C-4, C-5, C-10, and C-13. The role of the NAD(+)-dependent enzymes remains unknown. Numerous melleolides, including arnamial, show 5'-O-methylation of the aromatic moiety which may be catalyzed by the methyltransferase encoded in the cluster. The flavin-dependent oxidoreductase might represent the dehydrogenase yielding the aldehyde in position 1 of arnamial and other melleolides. Finally, several halogenases, localized outside of the cluster, are able to catalyze the transfer of a single chlorine atom to the melleolide backbone, resulting in a 6'-chloromelleolide product. The chain is Delta(6)-protoilludene synthase from Armillaria gallica (Bulbous honey fungus).